A 661-amino-acid polypeptide reads, in one-letter code: UvrABC system protein C (661 aa).

The GIY-YIG domain occupies 26 to 105; that stretch reads AEPGCYLMRD…IKNHQPHFNV (80 aa). In terms of domain architecture, UVR spans 215-250; it reads DELQNLLQEQMHKYADRTDYESAARVRDQLQGLDQL.

This sequence belongs to the UvrC family. In terms of assembly, interacts with UvrB in an incision complex.

The protein localises to the cytoplasm. In terms of biological role, the UvrABC repair system catalyzes the recognition and processing of DNA lesions. UvrC both incises the 5' and 3' sides of the lesion. The N-terminal half is responsible for the 3' incision and the C-terminal half is responsible for the 5' incision. This chain is UvrABC system protein C, found in Synechococcus sp. (strain CC9902).